The sequence spans 353 residues: tRNA-specific 2-thiouridylase MnmA 2 (353 aa).

Residues 9–16 (AMSGGVDS) and M35 each bind ATP. The active-site Nucleophile is the C98. Residues C98 and C194 are joined by a disulfide bond. G122 contributes to the ATP binding site. The tract at residues 144–146 (KDQ) is interaction with tRNA. C194 functions as the Cysteine persulfide intermediate in the catalytic mechanism. The tract at residues 300-301 (RY) is interaction with tRNA.

The protein belongs to the MnmA/TRMU family.

Its subcellular location is the cytoplasm. The catalysed reaction is S-sulfanyl-L-cysteinyl-[protein] + uridine(34) in tRNA + AH2 + ATP = 2-thiouridine(34) in tRNA + L-cysteinyl-[protein] + A + AMP + diphosphate + H(+). Its function is as follows. Catalyzes the 2-thiolation of uridine at the wobble position (U34) of tRNA, leading to the formation of s(2)U34. In Clostridium botulinum (strain ATCC 19397 / Type A), this protein is tRNA-specific 2-thiouridylase MnmA 2.